The chain runs to 201 residues: Ras-related protein Rab-1B (201 aa).

The residue at position 1 (methionine 1) is an N-acetylmethionine. Residues serine 17, glycine 18, valine 19, glycine 20, lysine 21, serine 22, cysteine 23, tyrosine 33, threonine 34, glutamate 35, serine 36, serine 39, and threonine 40 each contribute to the GTP site. Serine 22 provides a ligand contact to Mg(2+). Positions 30 to 45 (DDTYTESYISTIGVDF) match the Switch 1 motif. Residues threonine 40 and aspartate 63 each coordinate Mg(2+). The interval 64–83 (TAGQERFRTITSSYYRGAHG) is switch 2 region; Required for interaction with REP1/CHM. Positions 65–80 (AGQERFRTITSSYYRG) match the Switch 2 motif. GTP contacts are provided by glycine 66, asparagine 121, lysine 122, aspartate 124, serine 151, alanine 152, and lysine 153. The segment at 173–201 (MGPGAASGGERPNLKIDSTPVKQAGGGCC) is disordered. S-geranylgeranyl cysteine attachment occurs at residues cysteine 200 and cysteine 201. The residue at position 201 (cysteine 201) is a Cysteine methyl ester.

Belongs to the small GTPase superfamily. Rab family. In terms of assembly, interacts with MICAL1 and MICAL2. Interacts (in GTP-bound form) with MICALCL, MICAL1 and MILCAL3. Interacts with GDI1; the interaction requires the GDP-bound state. Interacts with CHM/REP1; the interaction requires the GDP-bound form and is necessary for prenylation by GGTase II. Interacts with RabGAP TBC1D20. Interacts (in GDP-bound form) with lipid phosphatase MTMR6 (via GRAM domain); the interaction regulates MTMR6 recruitment to the endoplasmic reticulum-Golgi intermediate compartment. Interacts (in GDP-bound form) with lipid phosphatase MTMR7. Mg(2+) is required as a cofactor. Prenylated; by GGTase II, only after interaction of the substrate with Rab escort protein 1 (REP1).

The protein localises to the cytoplasm. It localises to the membrane. The protein resides in the preautophagosomal structure membrane. Its subcellular location is the perinuclear region. It catalyses the reaction GTP + H2O = GDP + phosphate + H(+). Its activity is regulated as follows. Regulated by guanine nucleotide exchange factors (GEFs) which promote the exchange of bound GDP for free GTP. Regulated by GTPase activating proteins (GAPs) including TBC1D20 which increases the GTP hydrolysis activity. Inhibited by GDP dissociation inhibitors (GDIs). In terms of biological role, the small GTPases Rab are key regulators of intracellular membrane trafficking, from the formation of transport vesicles to their fusion with membranes. Rabs cycle between an inactive GDP-bound form and an active GTP-bound form that is able to recruit to membranes different set of downstream effectors directly responsible for vesicle formation, movement, tethering and fusion. Plays a role in the initial events of the autophagic vacuole development which take place at specialized regions of the endoplasmic reticulum. Regulates vesicular transport between the endoplasmic reticulum and successive Golgi compartments. Required to modulate the compacted morphology of the Golgi. Promotes the recruitment of lipid phosphatase MTMR6 to the endoplasmic reticulum-Golgi intermediate compartment. The polypeptide is Ras-related protein Rab-1B (RAB1B) (Bos taurus (Bovine)).